The sequence spans 178 residues: Fluoride-specific ion channel FluC 2 (178 aa).

Helical transmembrane passes span 25 to 45 (PDIHLDIVLVVFCGGAIGTAI), 63 to 83 (FVANMLACFCYAGLTAYLAGA), 97 to 117 (GLGMGVCGGLSTMSTLALEGF), and 129 to 149 (IAYLLVTFALGLVCASAGVWA). Na(+) contacts are provided by G104 and S107.

This sequence belongs to the fluoride channel Fluc/FEX (TC 1.A.43) family.

The protein localises to the cell membrane. It catalyses the reaction fluoride(in) = fluoride(out). With respect to regulation, na(+) is not transported, but it plays an essential structural role and its presence is essential for fluoride channel function. In terms of biological role, fluoride-specific ion channel. Important for reducing fluoride concentration in the cell, thus reducing its toxicity. The polypeptide is Fluoride-specific ion channel FluC 2 (Bifidobacterium longum (strain NCC 2705)).